A 212-amino-acid polypeptide reads, in one-letter code: Protein Rv0786c (212 aa).

The polypeptide is Protein Rv0786c (Mycobacterium tuberculosis (strain ATCC 25618 / H37Rv)).